A 380-amino-acid polypeptide reads, in one-letter code: Erythronate-4-phosphate dehydrogenase (380 aa).

Substrate contacts are provided by Ser-45 and Thr-66. NAD(+) contacts are provided by residues Gln-126–Val-127, Asp-146, Thr-174, Ala-205–Arg-207, and Asp-231. The active site involves Arg-207. Glu-236 is a catalytic residue. His-253 serves as the catalytic Proton donor. Gly-256 is an NAD(+) binding site. Tyr-257 lines the substrate pocket.

Belongs to the D-isomer specific 2-hydroxyacid dehydrogenase family. PdxB subfamily. Homodimer.

Its subcellular location is the cytoplasm. It catalyses the reaction 4-phospho-D-erythronate + NAD(+) = (R)-3-hydroxy-2-oxo-4-phosphooxybutanoate + NADH + H(+). Its pathway is cofactor biosynthesis; pyridoxine 5'-phosphate biosynthesis; pyridoxine 5'-phosphate from D-erythrose 4-phosphate: step 2/5. Catalyzes the oxidation of erythronate-4-phosphate to 3-hydroxy-2-oxo-4-phosphonooxybutanoate. The sequence is that of Erythronate-4-phosphate dehydrogenase from Pseudomonas savastanoi pv. phaseolicola (strain 1448A / Race 6) (Pseudomonas syringae pv. phaseolicola (strain 1448A / Race 6)).